The sequence spans 37 residues: MKVNPSVKPICDKCRVIRRHGRVMVICQDPRHKQRQG.

Belongs to the bacterial ribosomal protein bL36 family.

The protein is Large ribosomal subunit protein bL36 of Mycobacteroides abscessus (strain ATCC 19977 / DSM 44196 / CCUG 20993 / CIP 104536 / JCM 13569 / NCTC 13031 / TMC 1543 / L948) (Mycobacterium abscessus).